Reading from the N-terminus, the 602-residue chain is UvrABC system protein C (602 aa).

The GIY-YIG domain maps to threonine 17–isoleucine 94. One can recognise a UVR domain in the interval serine 199–isoleucine 234.

The protein belongs to the UvrC family. In terms of assembly, interacts with UvrB in an incision complex.

It localises to the cytoplasm. In terms of biological role, the UvrABC repair system catalyzes the recognition and processing of DNA lesions. UvrC both incises the 5' and 3' sides of the lesion. The N-terminal half is responsible for the 3' incision and the C-terminal half is responsible for the 5' incision. This is UvrABC system protein C from Borrelia turicatae (strain 91E135).